Reading from the N-terminus, the 126-residue chain is Large-conductance mechanosensitive channel (126 aa).

3 consecutive transmembrane segments (helical) span residues 14 to 34 (VIDL…VTSL), 40 to 60 (MPLL…FTFV), and 67 to 87 (GLFI…FLFI).

It belongs to the MscL family. In terms of assembly, homopentamer.

The protein localises to the cell membrane. In terms of biological role, channel that opens in response to stretch forces in the membrane lipid bilayer. May participate in the regulation of osmotic pressure changes within the cell. The protein is Large-conductance mechanosensitive channel of Bacillus licheniformis (strain ATCC 14580 / DSM 13 / JCM 2505 / CCUG 7422 / NBRC 12200 / NCIMB 9375 / NCTC 10341 / NRRL NRS-1264 / Gibson 46).